A 515-amino-acid polypeptide reads, in one-letter code: 2,3-bisphosphoglycerate-independent phosphoglycerate mutase (515 aa).

Residues Asp-14 and Ser-64 each coordinate Mn(2+). The active-site Phosphoserine intermediate is the Ser-64. Substrate is bound by residues His-125, Arg-155 to Asp-156, Arg-187, Arg-193, Arg-263 to Arg-266, and Lys-337. Residues Asp-404, His-408, Asp-445, His-446, and His-464 each contribute to the Mn(2+) site.

The protein belongs to the BPG-independent phosphoglycerate mutase family. As to quaternary structure, monomer. Mn(2+) is required as a cofactor.

It catalyses the reaction (2R)-2-phosphoglycerate = (2R)-3-phosphoglycerate. Its pathway is carbohydrate degradation; glycolysis; pyruvate from D-glyceraldehyde 3-phosphate: step 3/5. In terms of biological role, catalyzes the interconversion of 2-phosphoglycerate and 3-phosphoglycerate. The chain is 2,3-bisphosphoglycerate-independent phosphoglycerate mutase from Cronobacter sakazakii (strain ATCC BAA-894) (Enterobacter sakazakii).